The sequence spans 1194 residues: Peroxisomal ATPase PEX1 (1194 aa).

The segment at 220–255 (KTRQRRMSHQGKSVKAKSLASTRHGKRRDDGSGPSG) is disordered. The segment covering 221-234 (TRQRRMSHQGKSVK) has biased composition (basic residues). The interval 538–730 (RSASVLLTGA…GPEPTLKIEK (193 aa)) is AAA-cassette D1. ATP contacts are provided by residues 546–553 (GARGSGKT) and 849–856 (GYPGCGKT). The segment at 844 to 1028 (GLLLYGYPGC…LYNAHLEAIH (185 aa)) is AAA-cassette D2. Disordered stretches follow at residues 1062–1084 (YISFSMGNKDSTGEPSTQPLTNG), 1116–1139 (QVQQQQSQTNQAQEEEKGDDEPVI), and 1174–1194 (RSGEMPSGQSSTEIGGRSSLM). A compositionally biased stretch (polar residues) spans 1066–1084 (SMGNKDSTGEPSTQPLTNG). Low complexity predominate over residues 1116 to 1127 (QVQQQQSQTNQA).

The protein belongs to the AAA ATPase family. In terms of assembly, interacts with PEX6; forming the PEX1-PEX6 AAA ATPase complex, which is composed of a heterohexamer formed by a trimer of PEX1-PEX6 dimers.

It is found in the cytoplasm. Its subcellular location is the cytosol. The protein resides in the peroxisome membrane. It carries out the reaction ATP + H2O = ADP + phosphate + H(+). Functionally, component of the PEX1-PEX6 AAA ATPase complex, a protein dislocase complex that mediates the ATP-dependent extraction of the PEX5 receptor from peroxisomal membranes, an essential step for PEX5 recycling. Specifically recognizes PEX5 monoubiquitinated at 'Cys-6', and pulls it out of the peroxisome lumen through the PEX2-PEX10-PEX12 retrotranslocation channel. Extraction by the PEX1-PEX6 AAA ATPase complex is accompanied by unfolding of the TPR repeats and release of bound cargo from PEX5. Regulates autophagy and biogenesis of peroxisomes and Woronin bodies. Plays important roles in mycelial growth and development and stress response. Is also essential for conidiation and fatty acid utilization. Required for nematode predation via trap formation. The protein is Peroxisomal ATPase PEX1 of Arthrobotrys oligospora (strain ATCC 24927 / CBS 115.81 / DSM 1491) (Nematode-trapping fungus).